A 278-amino-acid chain; its full sequence is HTH-type transcriptional activator RhaS (278 aa).

Positions N174–G272 constitute an HTH araC/xylS-type domain. 2 DNA-binding regions (H-T-H motif) span residues D191–T212 and V239–F262.

In terms of assembly, binds DNA as a dimer.

Its subcellular location is the cytoplasm. Activates expression of the rhaBAD and rhaT operons. This chain is HTH-type transcriptional activator RhaS, found in Shigella boydii serotype 18 (strain CDC 3083-94 / BS512).